The primary structure comprises 437 residues: Succinate--CoA ligase [ADP-forming] subunit beta, hydrogenosomal (437 aa).

A hydrogenosome-targeting transit peptide spans 1–27 (MLANVTRSTSKAAPALASIAQTAQKRF). Residues 36–278 (MNLLHEYNVN…TTQEDPREVA (243 aa)) enclose the ATP-grasp domain. Residues Lys-73, 80–82 (GRG), and Glu-141 contribute to the ATP site. Mg(2+) is bound by residues Asn-233 and Asp-247. Residues Asn-299 and 356–358 (GIM) each bind substrate.

Belongs to the succinate/malate CoA ligase beta subunit family. Heterodimer of an alpha and a beta subunit. It depends on Mg(2+) as a cofactor.

Its subcellular location is the hydrogenosome. It catalyses the reaction succinate + ATP + CoA = succinyl-CoA + ADP + phosphate. It functions in the pathway carbohydrate metabolism; tricarboxylic acid cycle; succinate from succinyl-CoA (ligase route): step 1/1. Its function is as follows. Succinyl-CoA synthetase functions in the citric acid cycle (TCA), coupling the hydrolysis of succinyl-CoA to the synthesis of ATP and thus represents the only step of substrate-level phosphorylation in the TCA. The beta subunit provides nucleotide specificity of the enzyme and binds the substrate succinate, while the binding sites for coenzyme A and phosphate are found in the alpha subunit. This chain is Succinate--CoA ligase [ADP-forming] subunit beta, hydrogenosomal, found in Neocallimastix frontalis (Rumen fungus).